The sequence spans 235 residues: Large ribosomal subunit protein uL1 (235 aa).

The protein belongs to the universal ribosomal protein uL1 family. In terms of assembly, part of the 50S ribosomal subunit.

Its function is as follows. Binds directly to 23S rRNA. The L1 stalk is quite mobile in the ribosome, and is involved in E site tRNA release. In terms of biological role, protein L1 is also a translational repressor protein, it controls the translation of the L11 operon by binding to its mRNA. This is Large ribosomal subunit protein uL1 from Prochlorococcus marinus (strain MIT 9515).